Consider the following 122-residue polypeptide: Urease subunit beta (122 aa).

The protein belongs to the urease beta subunit family. As to quaternary structure, heterotrimer of UreA (gamma), UreB (beta) and UreC (alpha) subunits. Three heterotrimers associate to form the active enzyme.

Its subcellular location is the cytoplasm. It carries out the reaction urea + 2 H2O + H(+) = hydrogencarbonate + 2 NH4(+). The protein operates within nitrogen metabolism; urea degradation; CO(2) and NH(3) from urea (urease route): step 1/1. This is Urease subunit beta from Lysinibacillus sphaericus (strain C3-41).